Consider the following 292-residue polypeptide: Acetylglutamate kinase (292 aa).

Substrate is bound by residues 64–65 (GG), R86, and N190.

It belongs to the acetylglutamate kinase family. ArgB subfamily.

The protein resides in the cytoplasm. It catalyses the reaction N-acetyl-L-glutamate + ATP = N-acetyl-L-glutamyl 5-phosphate + ADP. The protein operates within amino-acid biosynthesis; L-arginine biosynthesis; N(2)-acetyl-L-ornithine from L-glutamate: step 2/4. Catalyzes the ATP-dependent phosphorylation of N-acetyl-L-glutamate. This Pelobacter propionicus (strain DSM 2379 / NBRC 103807 / OttBd1) protein is Acetylglutamate kinase.